A 427-amino-acid chain; its full sequence is Probable threonylcarbamoyladenosine tRNA methylthiotransferase (427 aa).

Residues 12 to 118 (MRVYVEGYGC…AGEILKNYVE (107 aa)) enclose the MTTase N-terminal domain. 6 residues coordinate [4Fe-4S] cluster: C21, C57, C86, C155, C159, and C162. A Radical SAM core domain is found at 141-370 (LKPSLITPLP…DKLRRELSYL (230 aa)). The 55-residue stretch at 373–427 (KKYIGKAMKVLVLDEGKGYTDNFKVVKFEGGEVGEFRKVKITDAKTFGLKGELIL) folds into the TRAM domain.

The protein belongs to the methylthiotransferase family. CDKAL1 subfamily. Requires [4Fe-4S] cluster as cofactor.

It carries out the reaction N(6)-L-threonylcarbamoyladenosine(37) in tRNA + (sulfur carrier)-SH + AH2 + 2 S-adenosyl-L-methionine = 2-methylsulfanyl-N(6)-L-threonylcarbamoyladenosine(37) in tRNA + (sulfur carrier)-H + 5'-deoxyadenosine + L-methionine + A + S-adenosyl-L-homocysteine + 2 H(+). In terms of biological role, catalyzes the methylthiolation of N6-threonylcarbamoyladenosine (t(6)A), leading to the formation of 2-methylthio-N6-threonylcarbamoyladenosine (ms(2)t(6)A) at position 37 in tRNAs that read codons beginning with adenine. The protein is Probable threonylcarbamoyladenosine tRNA methylthiotransferase of Methanocaldococcus jannaschii (strain ATCC 43067 / DSM 2661 / JAL-1 / JCM 10045 / NBRC 100440) (Methanococcus jannaschii).